The chain runs to 628 residues: MVAFSTISGLGALSLLFSIIESVDGVSLKVSTDGGNSSSPLLYGFMFEDINHSGDGGIYGQMIQNNGLQGSSPNLTAWASVGDGTISVDTTNPLTAAIPNSLKLDIKPDATGAVGFTNEGYWGIPVDGTEFQNSFWMKGDFSGEITVRLVGNETGTEYGSTTFNQSSSSDDYTKVSVKFPTTKAPDGNVLYELTVDGESAQGSSLSFTLFELFAQTYKSRSNGLKPQLADALESVKGSFLRFPGGNNLEGNDVETRWKWNETIGPLENRPGHQGTWGYFNTDGLGLDEYLYWCEDMNLTPVLGVWAGFALESGGNTPITGDALTPYIEDVLNELEYVLGDPSTTYGKLRASYGREEPWNVTLVEIGNEDNLGGGCESYAERFTAFYNAIHDAYPDLTLIASTDNASCLPSPLPEGAWVDYHNYNTPDELVKQFGMFDNVDRSVPYFIGEYSRWEIPWPNMQGSVAEAVFMIGLERNSDVVKMAAYAPLLQLVNSTQWTPDLISFTQNPNMVIDSTSYYVQQMFSVNRGDTIKEVTSDSAFGPVYWVASSSGSSYYVKLANYGADTQEVSVSIPGMSSGKLTVLADSDPEAYNSDTQTLVTPSESNVQASNGQFSFTLPAWSVAVLTAN.

Positions 1–25 (MVAFSTISGLGALSLLFSIIESVDG) are cleaved as a signal peptide. 9 N-linked (GlcNAc...) asparagine glycosylation sites follow: N36, N51, N74, N152, N164, N260, N359, N404, and N493.

It belongs to the glycosyl hydrolase 51 family.

Its subcellular location is the secreted. The catalysed reaction is Hydrolysis of terminal non-reducing alpha-L-arabinofuranoside residues in alpha-L-arabinosides.. It participates in glycan metabolism; L-arabinan degradation. Functionally, alpha-L-arabinofuranosidase involved in the degradation of arabinoxylan, a major component of plant hemicellulose. Acts only on small linear 1,5-alpha-linked L-arabinofuranosyl oligosaccharides. The chain is Probable alpha-L-arabinofuranosidase A (abfA) from Aspergillus terreus (strain NIH 2624 / FGSC A1156).